The sequence spans 318 residues: Methionyl-tRNA formyltransferase (318 aa).

111-114 (SLLP) provides a ligand contact to (6S)-5,6,7,8-tetrahydrofolate.

It belongs to the Fmt family.

It carries out the reaction L-methionyl-tRNA(fMet) + (6R)-10-formyltetrahydrofolate = N-formyl-L-methionyl-tRNA(fMet) + (6S)-5,6,7,8-tetrahydrofolate + H(+). Attaches a formyl group to the free amino group of methionyl-tRNA(fMet). The formyl group appears to play a dual role in the initiator identity of N-formylmethionyl-tRNA by promoting its recognition by IF2 and preventing the misappropriation of this tRNA by the elongation apparatus. The sequence is that of Methionyl-tRNA formyltransferase from Chlorobium limicola (strain DSM 245 / NBRC 103803 / 6330).